The primary structure comprises 412 residues: Multifunctional CCA protein (412 aa).

ATP is bound by residues Gly8 and Arg11. CTP contacts are provided by Gly8 and Arg11. The Mg(2+) site is built by Glu21 and Asp23. ATP contacts are provided by Arg91, Arg137, and Arg140. 3 residues coordinate CTP: Arg91, Arg137, and Arg140. The HD domain maps to 228–329; sequence CGIHTLMSLQ…WRLLQRLDVL (102 aa).

The protein belongs to the tRNA nucleotidyltransferase/poly(A) polymerase family. Bacterial CCA-adding enzyme type 1 subfamily. Monomer. Can also form homodimers and oligomers. Mg(2+) serves as cofactor. It depends on Ni(2+) as a cofactor.

The catalysed reaction is a tRNA precursor + 2 CTP + ATP = a tRNA with a 3' CCA end + 3 diphosphate. It carries out the reaction a tRNA with a 3' CCA end + 2 CTP + ATP = a tRNA with a 3' CCACCA end + 3 diphosphate. Its function is as follows. Catalyzes the addition and repair of the essential 3'-terminal CCA sequence in tRNAs without using a nucleic acid template. Adds these three nucleotides in the order of C, C, and A to the tRNA nucleotide-73, using CTP and ATP as substrates and producing inorganic pyrophosphate. tRNA 3'-terminal CCA addition is required both for tRNA processing and repair. Also involved in tRNA surveillance by mediating tandem CCA addition to generate a CCACCA at the 3' terminus of unstable tRNAs. While stable tRNAs receive only 3'-terminal CCA, unstable tRNAs are marked with CCACCA and rapidly degraded. This is Multifunctional CCA protein from Acinetobacter baumannii (strain AB307-0294).